Here is a 172-residue protein sequence, read N- to C-terminus: Disulfide bond formation protein B (172 aa).

The Cytoplasmic portion of the chain corresponds to 1–11; that stretch reads MNPFRWSFRAQ. Residues 12–28 form a helical membrane-spanning segment; sequence FLLGFLACAGLLAYAIY. At 29-46 the chain is on the periplasmic side; sequence VQLHLGLEPCPLCIFQRI. Cys38 and Cys41 are disulfide-bonded. The helical transmembrane segment at 47–63 threads the bilayer; that stretch reads AFAALAVFFLIGALHGP. At 64–70 the chain is on the cytoplasmic side; it reads RAAGARK. Residues 71–88 form a helical membrane-spanning segment; it reads VYGVLSFIAAGVGMGIGA. Over 89-145 the chain is Periplasmic; it reads RHVWVQIRPKDMMSSCGPPLSFLSETMGPFEVFRTVLTGTGDCGNIDWRFLGLSMPM. Residues Cys104 and Cys131 are joined by a disulfide bond. The chain crosses the membrane as a helical span at residues 146 to 164; that stretch reads WSMVWFVGLALWALSAGFK. Topologically, residues 165-172 are cytoplasmic; that stretch reads ARRSSLHH.

It belongs to the DsbB family.

Its subcellular location is the cell inner membrane. In terms of biological role, required for disulfide bond formation in some periplasmic proteins. Acts by oxidizing the DsbA protein. This chain is Disulfide bond formation protein B, found in Xanthomonas oryzae pv. oryzae (strain MAFF 311018).